Reading from the N-terminus, the 560-residue chain is S100P-binding protein (560 aa).

Disordered regions lie at residues 259-292 (SDIPFDGDIDELLTLSPGDTTSSEEDKITSESTP) and 313-400 (SSSS…GKSF). Residues 313-352 (SSSSLQLPETSLASSTEPSPSLQLSASSVTAMNGQNNSNK) show a composition bias toward polar residues. Over residues 378–387 (QKVEPKKNKP) the composition is skewed to basic and acidic residues.

Its subcellular location is the nucleus. The chain is S100P-binding protein (s100pbp) from Xenopus laevis (African clawed frog).